We begin with the raw amino-acid sequence, 833 residues long: Urease (833 aa).

Residues 395–833 (GALDVHVHYI…LPLTKRYFVY (439 aa)) form the Urease domain. Ni(2+) contacts are provided by H400 and H402. 2 residues coordinate urea: H402 and A433. K483 contributes to the Ni(2+) binding site. N6-carboxylysine is present on K483. Urea is bound by residues H485 and H512. The Ni(2+) site is built by H512 and H538. H586 functions as the Proton donor in the catalytic mechanism. D626 provides a ligand contact to Ni(2+). A629 provides a ligand contact to urea.

The protein in the C-terminal section; belongs to the metallo-dependent hydrolases superfamily. Urease alpha subunit family. As to quaternary structure, homohexamer. It depends on Ni(2+) as a cofactor. In terms of processing, carboxylation allows a single lysine to coordinate two nickel ions.

The catalysed reaction is urea + 2 H2O + H(+) = hydrogencarbonate + 2 NH4(+). It functions in the pathway nitrogen metabolism; urea degradation; CO(2) and NH(3) from urea (urease route): step 1/1. The urease accessory proteins URE4, URE6 and URE7 are required for urease activity, URE7 supplying nickel for the functional urease. Functionally, plays a nutritional role via nitrogen acquisition in the environment. Contributes to the central nervous system invasion by enhancing yeast sequestration within microcapillary beds (such as within the brain) during hematogenous spread, thereby facilitating blood-to-brain invasion by C.neoformans. Affects fitness within the mammalian phagosome, promoting non-lytic exocytosis while delaying intracellular replication and thus reducing phagolysosomal membrane damage, events that could facilitate cryptococcal dissemination when transported inside macrophages. Urease activity is also associated with the regulation of key intracellular metabolic pathways, including melanin biosynthesis, polyamine biosynthesis, as well as intracellular levels of proline and reactive oxygen species. The protein is Urease of Cryptococcus neoformans var. neoformans serotype D (strain B-3501A) (Filobasidiella neoformans).